The primary structure comprises 231 residues: Ribonuclease 3 (231 aa).

The 130-residue stretch at 6 to 135 (AAMLKERFGI…FVGALYLDQG (130 aa)) folds into the RNase III domain. Glu-48 contacts Mg(2+). Asp-52 is an active-site residue. Residues Asp-121 and Glu-124 each coordinate Mg(2+). The active site involves Glu-124. A DRBM domain is found at 161–230 (DYKTTLQEYL…ARQAYSQLQQ (70 aa)). Residues 209 to 231 (WGHSKKEAEQSAARQAYSQLQQK) form a disordered region. Polar residues predominate over residues 220–231 (AARQAYSQLQQK).

This sequence belongs to the ribonuclease III family. As to quaternary structure, homodimer. Mg(2+) is required as a cofactor.

The protein resides in the cytoplasm. It catalyses the reaction Endonucleolytic cleavage to 5'-phosphomonoester.. Its function is as follows. Digests double-stranded RNA. Involved in the processing of primary rRNA transcript to yield the immediate precursors to the large and small rRNAs (23S and 16S). Processes some mRNAs, and tRNAs when they are encoded in the rRNA operon. Processes pre-crRNA and tracrRNA of type II CRISPR loci if present in the organism. In Lactiplantibacillus plantarum (strain ATCC BAA-793 / NCIMB 8826 / WCFS1) (Lactobacillus plantarum), this protein is Ribonuclease 3.